The chain runs to 453 residues: Chromosomal replication initiator protein DnaA (453 aa).

The segment at 1 to 79 (MKSLIQEKWN…KTAIAEVINQ (79 aa)) is domain I, interacts with DnaA modulators. A domain II region spans residues 79–111 (QDFEIEFVLLSQTKAEEKVQTQAPNKIKNESLS). The tract at residues 112-330 (YLNPRYTFDT…GALTKIVALS (219 aa)) is domain III, AAA+ region. ATP is bound by residues Gly-156, Gly-158, Lys-159, and Thr-160. Residues 331–453 (RLKKKEVDVI…VLIKKINPTP (123 aa)) are domain IV, binds dsDNA.

The protein belongs to the DnaA family. As to quaternary structure, oligomerizes as a right-handed, spiral filament on DNA at oriC.

It localises to the cytoplasm. In terms of biological role, plays an essential role in the initiation and regulation of chromosomal replication. ATP-DnaA binds to the origin of replication (oriC) to initiate formation of the DNA replication initiation complex once per cell cycle. Binds the DnaA box (a 9 base pair repeat at the origin) and separates the double-stranded (ds)DNA. Forms a right-handed helical filament on oriC DNA; dsDNA binds to the exterior of the filament while single-stranded (ss)DNA is stabiized in the filament's interior. The ATP-DnaA-oriC complex binds and stabilizes one strand of the AT-rich DNA unwinding element (DUE), permitting loading of DNA polymerase. After initiation quickly degrades to an ADP-DnaA complex that is not apt for DNA replication. Binds acidic phospholipids. The polypeptide is Chromosomal replication initiator protein DnaA (Lachnoclostridium phytofermentans (strain ATCC 700394 / DSM 18823 / ISDg) (Clostridium phytofermentans)).